The primary structure comprises 310 residues: tRNA-cytidine(32) 2-sulfurtransferase (310 aa).

The PP-loop motif signature appears at 47–52 (SGGKDS). [4Fe-4S] cluster-binding residues include Cys-122, Cys-125, and Cys-213.

This sequence belongs to the TtcA family. In terms of assembly, homodimer. Mg(2+) is required as a cofactor. [4Fe-4S] cluster serves as cofactor.

The protein localises to the cytoplasm. It catalyses the reaction cytidine(32) in tRNA + S-sulfanyl-L-cysteinyl-[cysteine desulfurase] + AH2 + ATP = 2-thiocytidine(32) in tRNA + L-cysteinyl-[cysteine desulfurase] + A + AMP + diphosphate + H(+). Its pathway is tRNA modification. Its function is as follows. Catalyzes the ATP-dependent 2-thiolation of cytidine in position 32 of tRNA, to form 2-thiocytidine (s(2)C32). The sulfur atoms are provided by the cysteine/cysteine desulfurase (IscS) system. The sequence is that of tRNA-cytidine(32) 2-sulfurtransferase from Cronobacter sakazakii (strain ATCC BAA-894) (Enterobacter sakazakii).